The following is a 731-amino-acid chain: Ubiquitin carboxyl-terminal hydrolase 17 (731 aa).

Zn(2+) is bound by residues cysteine 57, cysteine 60, cysteine 68, cysteine 71, cysteine 77, cysteine 81, histidine 90, and cysteine 94. The MYND-type zinc finger occupies 57-94 (CAVCLYPTTTRCSQCKSVRYCSSKCQILHWRRGHKEEC). Disordered stretches follow at residues 171 to 219 (YETR…DSAN) and 262 to 281 (LPSKANSKPKVSQASSSGLK). Composition is skewed to polar residues over residues 207 to 219 (GNQNSRRSGDSAN) and 265 to 281 (KANSKPKVSQASSSGLK). A USP domain is found at 329 to 633 (FGLVNLGNSC…GAYMLLYARD (305 aa)). Cysteine 338 (nucleophile) is an active-site residue. Residue histidine 592 is the Proton acceptor of the active site. The segment at 637–702 (PVSKNGGRKS…TSSCSTKDSS (66 aa)) is disordered. The segment covering 677–701 (DWSSGSLSSMFSSSDTTSSCSTKDS) has biased composition (low complexity).

This sequence belongs to the peptidase C19 family.

The enzyme catalyses Thiol-dependent hydrolysis of ester, thioester, amide, peptide and isopeptide bonds formed by the C-terminal Gly of ubiquitin (a 76-residue protein attached to proteins as an intracellular targeting signal).. Recognizes and hydrolyzes the peptide bond at the C-terminal Gly of ubiquitin. Involved in the processing of poly-ubiquitin precursors as well as that of ubiquitinated proteins. The chain is Ubiquitin carboxyl-terminal hydrolase 17 (UBP17) from Arabidopsis thaliana (Mouse-ear cress).